The chain runs to 461 residues: Steroidogenic factor 1 (461 aa).

Positions Asp-10 to Ala-85 form a DNA-binding region, nuclear receptor. An NR C4-type zinc finger spans residues Cys-13 to Cys-33. N6-acetyllysine is present on residues Lys-34, Lys-38, and Lys-72. The NR C4-type zinc finger occupies Cys-49 to Cys-73. The disordered stretch occupies residues Asn-116–Ala-158. Residue Lys-119 forms a Glycyl lysine isopeptide (Lys-Gly) (interchain with G-Cter in SUMO) linkage. Residues Val-126–Tyr-138 are compositionally biased toward pro residues. Residue Lys-194 forms a Glycyl lysine isopeptide (Lys-Gly) (interchain with G-Cter in SUMO) linkage. Ser-203 bears the Phosphoserine; by CDK7 mark. The region spanning Gly-222–Lys-459 is the NR LBD domain. Positions Leu-230–Thr-461 are important for dimerization. Residues Gly-341, Tyr-436, and Lys-440 each coordinate a 1,2-diacyl-sn-glycero-3-phosphocholine.

Belongs to the nuclear hormone receptor family. NR5 subfamily. Binds DNA as a monomer. Part of a complex consisting of SFPQ, NONO and NR5A1. Interacts with NR0B2. Interacts with DGKQ and CDK7. Binds to and activated by HIPK3. May be regulated by phosphorylation and dephosphorylation. Post-translationally, acetylation stimulates the transcriptional activity. In terms of processing, sumoylation reduces CDK7-mediated phosphorylation on Ser-203. Phosphorylated on Ser-203 by CDK7. This phosphorylation promotes transcriptional activity. Adrenal, ovary, testis, placenta, adipocyte, and brain.

It is found in the nucleus. Transcriptional activator. Seems to be essential for sexual differentiation and formation of the primary steroidogenic tissues. Binds to the Ad4 site found in the promoter region of steroidogenic P450 genes such as CYP11A, CYP11B and CYP21B. Also regulates the AMH/Muellerian inhibiting substance gene as well as the AHCH and STAR genes. 5'-YCAAGGYC-3' and 5'-RRAGGTCA-3' are the consensus sequences for the recognition by NR5A1. The SFPQ-NONO-NR5A1 complex binds to the CYP17 promoter and regulates basal and cAMP-dependent transcriptional activity. Binds phospholipids with a phosphatidylinositol (PI) headgroup, in particular PI(3,4)P2 and PI(3,4,5)P3. Activated by the phosphorylation of NR5A1 by HIPK3 leading to increased steroidogenic gene expression upon cAMP signaling pathway stimulation. The polypeptide is Steroidogenic factor 1 (NR5A1) (Bos taurus (Bovine)).